The primary structure comprises 238 residues: Purine nucleoside phosphorylase DeoD-type (238 aa).

Position 4 (His-4) interacts with a purine D-ribonucleoside. Residues Gly-20, Arg-24, Arg-43, and 87-90 (RIGS) each bind phosphate. Residues 181–183 (EME) and 205–206 (SD) contribute to the a purine D-ribonucleoside site. Asp-206 functions as the Proton donor in the catalytic mechanism.

It belongs to the PNP/UDP phosphorylase family. As to quaternary structure, homohexamer; trimer of homodimers.

The enzyme catalyses a purine D-ribonucleoside + phosphate = a purine nucleobase + alpha-D-ribose 1-phosphate. It carries out the reaction a purine 2'-deoxy-D-ribonucleoside + phosphate = a purine nucleobase + 2-deoxy-alpha-D-ribose 1-phosphate. Catalyzes the reversible phosphorolytic breakdown of the N-glycosidic bond in the beta-(deoxy)ribonucleoside molecules, with the formation of the corresponding free purine bases and pentose-1-phosphate. This is Purine nucleoside phosphorylase DeoD-type from Mycoplasma pneumoniae (strain ATCC 29342 / M129 / Subtype 1) (Mycoplasmoides pneumoniae).